Reading from the N-terminus, the 132-residue chain is Ribonuclease VapC15 (132 aa).

Residues 1–121 enclose the PINc domain; it reads MIVDTSVWIA…HRDRDYEAIR (121 aa). Asp-96 serves as a coordination point for Mg(2+). Positions 96, 114, and 116 each coordinate Mn(2+).

It belongs to the PINc/VapC protein family. In terms of assembly, crystallizes as a VapB15-VapC15(2) heterotrimer and as a VapB15(2)-VapC15(2) heterotetramer; each toxin pair forms a homodimer which creates a channel in which the antitoxin binds. Mg(2+) serves as cofactor. It depends on Mn(2+) as a cofactor.

With respect to regulation, RNase activity inhibited by EDTA. In terms of biological role, toxic component of a type II toxin-antitoxin (TA) system. Degrades total E.coli RNA, which is partially inhibited by cognate antitoxin VapB15. Upon expression in M.smegmatis inhibits colony formation, which is neutralized by coexpression with VapB15. The polypeptide is Ribonuclease VapC15 (Mycobacterium tuberculosis (strain ATCC 25618 / H37Rv)).